The sequence spans 491 residues: Feruloyl-CoA synthase (491 aa).

Residue threonine 154 participates in Mg(2+) binding. ATP-binding residues include alanine 199, glycine 291, and threonine 295. Position 296 (glutamate 296) interacts with Mg(2+). Aspartate 374 and lysine 391 together coordinate ATP.

This sequence belongs to the ATP-dependent AMP-binding enzyme family. Requires Mg(2+) as cofactor.

The catalysed reaction is (E)-ferulate + ATP + CoA = (E)-feruloyl-CoA + AMP + diphosphate. In terms of biological role, catalyzes the formation of (E)-feruloyl-CoA, AMP and diphosphate from (E)-ferulate, CoA and ATP. Involved in the degradation pathway of lignin-derived aromatic compounds of plant cell walls. Catalyzes the first enzymatic step in the conversion of ferulic acid into high value compound vanillin. The sequence is that of Feruloyl-CoA synthase from Amycolatopsis sp.